A 181-amino-acid polypeptide reads, in one-letter code: Probable nicotinate-nucleotide adenylyltransferase (181 aa).

This sequence belongs to the NadD family.

It carries out the reaction nicotinate beta-D-ribonucleotide + ATP + H(+) = deamido-NAD(+) + diphosphate. Its pathway is cofactor biosynthesis; NAD(+) biosynthesis; deamido-NAD(+) from nicotinate D-ribonucleotide: step 1/1. In terms of biological role, catalyzes the reversible adenylation of nicotinate mononucleotide (NaMN) to nicotinic acid adenine dinucleotide (NaAD). This Campylobacter fetus subsp. fetus (strain 82-40) protein is Probable nicotinate-nucleotide adenylyltransferase.